We begin with the raw amino-acid sequence, 37 residues long: Large ribosomal subunit protein bL36c (37 aa).

Belongs to the bacterial ribosomal protein bL36 family.

It localises to the plastid. It is found in the chloroplast. The chain is Large ribosomal subunit protein bL36c from Phaeodactylum tricornutum (strain CCAP 1055/1).